A 495-amino-acid chain; its full sequence is NADH-ubiquinone oxidoreductase chain 4 (495 aa).

A run of 11 helical transmembrane segments spans residues 9 to 29, 39 to 59, 89 to 109, 139 to 159, 173 to 193, 214 to 234, 272 to 292, 313 to 333, 335 to 355, 367 to 387, and 413 to 433; these read YSNLSGLILCPVLGSITPLFI, LIGLCASLITFLYSPVPRIQF, ISLFFVILTTFLIPICISVGW, LLLFYVFPESVPIPMFIIIGV, FFLYTLLGSLFMLLAILLILF, IFLWIASFASFAVKVPMVPVH, FPEATLCSTPFIYTLSAIAII, VAHMNLVTIGMFSPNIQGIGG, ILPMLSHGLVPSALFLCVGVL, YGGLVSTMPNLSTIFFSFTLA, and LVATLAALGMILGAAYSLWLY.

It belongs to the complex I subunit 4 family.

The protein resides in the mitochondrion membrane. The enzyme catalyses a ubiquinone + NADH + 5 H(+)(in) = a ubiquinol + NAD(+) + 4 H(+)(out). In terms of biological role, core subunit of the mitochondrial membrane respiratory chain NADH dehydrogenase (Complex I) that is believed to belong to the minimal assembly required for catalysis. Complex I functions in the transfer of electrons from NADH to the respiratory chain. The immediate electron acceptor for the enzyme is believed to be ubiquinone. This chain is NADH-ubiquinone oxidoreductase chain 4 (ND4), found in Brassica campestris (Field mustard).